Consider the following 127-residue polypeptide: MTITMLKSKIHRATVTEANLNYVGSITIDKYLMDKANILEYEKVQIVDIDNGNRFETYVIAGEKHSGVICLNGAAARMVQKGDKIIIMSYCSLTIDEANKFNPTVLFVDNKNNIEKLTNYEKHGEII.

Serine 25 acts as the Schiff-base intermediate with substrate; via pyruvic acid in catalysis. Serine 25 is subject to Pyruvic acid (Ser). Position 57 (threonine 57) interacts with substrate. Tyrosine 58 acts as the Proton donor in catalysis. 73-75 (GAA) lines the substrate pocket.

The protein belongs to the PanD family. In terms of assembly, heterooctamer of four alpha and four beta subunits. It depends on pyruvate as a cofactor. Post-translationally, is synthesized initially as an inactive proenzyme, which is activated by self-cleavage at a specific serine bond to produce a beta-subunit with a hydroxyl group at its C-terminus and an alpha-subunit with a pyruvoyl group at its N-terminus.

It localises to the cytoplasm. The enzyme catalyses L-aspartate + H(+) = beta-alanine + CO2. Its pathway is cofactor biosynthesis; (R)-pantothenate biosynthesis; beta-alanine from L-aspartate: step 1/1. In terms of biological role, catalyzes the pyruvoyl-dependent decarboxylation of aspartate to produce beta-alanine. This Clostridium botulinum (strain Okra / Type B1) protein is Aspartate 1-decarboxylase.